A 359-amino-acid chain; its full sequence is 5-amino-6-(D-ribitylamino)uracil--L-tyrosine 4-hydroxyphenyl transferase (359 aa).

Residues 45-282 (VTYVVNANIN…TYAISRIFFK (238 aa)) form the Radical SAM core domain. The [4Fe-4S] cluster site is built by Cys-59, Cys-63, and Cys-66.

The protein belongs to the radical SAM superfamily. CofH family. As to quaternary structure, consists of two subunits, CofG and CofH. [4Fe-4S] cluster is required as a cofactor.

The catalysed reaction is 5-amino-6-(D-ribitylamino)uracil + L-tyrosine + S-adenosyl-L-methionine = 5-amino-5-(4-hydroxybenzyl)-6-(D-ribitylimino)-5,6-dihydrouracil + 2-iminoacetate + 5'-deoxyadenosine + L-methionine + H(+). It functions in the pathway cofactor biosynthesis; coenzyme F0 biosynthesis. Catalyzes the radical-mediated synthesis of 5-amino-5-(4-hydroxybenzyl)-6-(D-ribitylimino)-5,6-dihydrouracil from 5-amino-6-(D-ribitylamino)uracil and L-tyrosine. The sequence is that of 5-amino-6-(D-ribitylamino)uracil--L-tyrosine 4-hydroxyphenyl transferase from Methanococcus maripaludis (strain C5 / ATCC BAA-1333).